The sequence spans 173 residues: Photosystem I assembly protein Ycf3 (173 aa).

TPR repeat units lie at residues 35 to 68 (AFAYYRDGMSAQGDGEYAEALENYQEALRLEEDP), 72 to 105 (AFILYNMALVYASNGEHNRALEQYEQALALNAKM), and 120 to 153 (GSIAQEKGESDEADRRFDLAADFWSKAIRLAPNN).

This sequence belongs to the Ycf3 family.

The protein resides in the cellular thylakoid membrane. Essential for the assembly of the photosystem I (PSI) complex. May act as a chaperone-like factor to guide the assembly of the PSI subunits. The polypeptide is Photosystem I assembly protein Ycf3 (Synechococcus sp. (strain RCC307)).